Consider the following 540-residue polypeptide: uncharacterized protein (540 aa).

Residues 1–61 (MFSIFKKKTS…TNDSPWQDPT (61 aa)) lie on the Cytoplasmic side of the membrane. The chain crosses the membrane as a helical span at residues 62–82 (YFSSFGKELMFIATCMLAQLL). The Extracellular segment spans residues 83–108 (NQAGQTHALCIMNVLSKSFNSEANNQ). The chain crosses the membrane as a helical span at residues 109-129 (AWLMASFPLAAGSFILISGRL). The Cytoplasmic portion of the chain corresponds to 130-131 (GD). The chain crosses the membrane as a helical span at residues 132 to 152 (IYGLKKMLIVGYVIVIVWSII). Over 153 to 169 (SGLSKYSNSDAFFITSR) the chain is Extracellular. The helical transmembrane segment at 170 to 190 (AFQGVGIAFILPNIMGLVGHV) threads the bilayer. The Cytoplasmic portion of the chain corresponds to 191 to 203 (YKVGSFRKNIVIS). A helical membrane pass occupies residues 204–224 (FIGACAPTGGMFGGLFGGLIV). The Extracellular portion of the chain corresponds to 225 to 232 (TEDPNQWP). A helical membrane pass occupies residues 233–253 (WVFYAFGIATFLSLLMAWYSI). Residues 254–272 (PNNVPTNIHGLSMDWTGSA) lie on the Cytoplasmic side of the membrane. A helical transmembrane segment spans residues 273 to 293 (LAIIGLILFNFVWNQAPIVGW). The Extracellular segment spans residues 294–295 (DK). A helical transmembrane segment spans residues 296-316 (PYIIVLLIISVIFLVAFFVYE). Residues 317–334 (SKYAEVPLLPRAMTKNRH) are Cytoplasmic-facing. The chain crosses the membrane as a helical span at residues 335–355 (MIMILLAVFLGWGSFGIWTFY). The Extracellular segment spans residues 356-372 (YVSFQLNLRHYSPVWTG). Residues 373–393 (GTYFVFVIFGSMAAFFVAFSI) form a helical membrane-spanning segment. Topologically, residues 394-398 (KRLGP) are cytoplasmic. Residues 399-419 (ALLLCFSLMAFDAGSIMFSVL) form a helical membrane-spanning segment. The Extracellular portion of the chain corresponds to 420–429 (PVEQSYWKLN). Residues 430–450 (FAMQAILCFGMDLSFPASSII) form a helical membrane-spanning segment. The Cytoplasmic portion of the chain corresponds to 451–461 (LSDGLPMQYQG). The helical transmembrane segment at 462–482 (MAGSLVNTVINYSASLCLGMG) threads the bilayer. Residues 483 to 502 (GTVEHQINKSGNDLLKGYRA) are Extracellular-facing. Residues 503-523 (AVYLGVGLASLGVVISVTYML) form a helical membrane-spanning segment. At 524-540 (ENLWNRHRKSEDRSLEA) the chain is on the cytoplasmic side.

It belongs to the major facilitator superfamily.

The protein localises to the membrane. This is an uncharacterized protein from Saccharomyces cerevisiae (strain ATCC 204508 / S288c) (Baker's yeast).